A 196-amino-acid chain; its full sequence is uncharacterized protein (196 aa).

The region spanning 51-164 (VAEHSLLVEE…DRIFGKPDPV (114 aa)) is the HD domain.

This is an uncharacterized protein from Rhodobacter capsulatus (strain ATCC BAA-309 / NBRC 16581 / SB1003).